A 187-amino-acid chain; its full sequence is Elongation factor P (187 aa).

Belongs to the elongation factor P family.

It localises to the cytoplasm. It participates in protein biosynthesis; polypeptide chain elongation. Its function is as follows. Involved in peptide bond synthesis. Stimulates efficient translation and peptide-bond synthesis on native or reconstituted 70S ribosomes in vitro. Probably functions indirectly by altering the affinity of the ribosome for aminoacyl-tRNA, thus increasing their reactivity as acceptors for peptidyl transferase. The chain is Elongation factor P from Pseudarthrobacter chlorophenolicus (strain ATCC 700700 / DSM 12829 / CIP 107037 / JCM 12360 / KCTC 9906 / NCIMB 13794 / A6) (Arthrobacter chlorophenolicus).